Reading from the N-terminus, the 356-residue chain is uncharacterized protein (356 aa).

The next 6 membrane-spanning stretches (helical) occupy residues 7 to 29 (LLSRFLGIFLNVSFVSVLLVSLY), 49 to 71 (YFLNILPLGFYYISFITLSISLI), 91 to 113 (ISPLRFSLPVLLFSVFLSSTFLL), 270 to 292 (LFYRVMFSLSPVFISIFSLYLFF), 299 to 316 (QVIPRFLVFIVILWLVIL), and 329 to 348 (VLYSLIPIFLLILYSLKGVY).

The protein localises to the cell membrane. This is an uncharacterized protein from Aquifex aeolicus (strain VF5).